The chain runs to 412 residues: Ornithine cyclodeaminase (412 aa).

10 residues coordinate NAD(+): asparagine 237, alanine 238, aspartate 316, threonine 348, methionine 349, leucine 350, histidine 351, aspartate 369, aspartate 392, and valine 393.

This sequence belongs to the AgrE/ArgZ ornithine cyclodeaminase family. NAD(+) serves as cofactor.

The enzyme catalyses L-ornithine = L-proline + NH4(+). Catalyzes the conversion of ornithine to proline, with the release of ammonia. This chain is Ornithine cyclodeaminase, found in Methanopyrus kandleri (strain AV19 / DSM 6324 / JCM 9639 / NBRC 100938).